Reading from the N-terminus, the 105-residue chain is Nucleoid-associated protein RPE_4812 (105 aa).

The protein belongs to the YbaB/EbfC family. Homodimer.

The protein localises to the cytoplasm. The protein resides in the nucleoid. Functionally, binds to DNA and alters its conformation. May be involved in regulation of gene expression, nucleoid organization and DNA protection. The protein is Nucleoid-associated protein RPE_4812 of Rhodopseudomonas palustris (strain BisA53).